A 126-amino-acid polypeptide reads, in one-letter code: Bactofilin BacO (126 aa).

This sequence belongs to the bactofilin family. Interacts with BacN and probably also BacP, the 3 proteins colocalize as an extended structure. Interacts with PadC.

The protein localises to the cytoplasm. It is found in the cytoskeleton. Functionally, a non-essential component of the chromosome segregation machinery. Positions the ParA-ParB-parS chromosome segregation machinery within the cell; BacP seems to be the most important bactofilin in this process. Forms a heteropolymeric, subpolar scaffold in the cell; BacP probably forms the core, BacO contributes to position and integrity while BacN does not seem to contribute to assembly. This chain is Bactofilin BacO, found in Myxococcus xanthus (strain DK1622).